A 600-amino-acid polypeptide reads, in one-letter code: MIDLMPKKNTFLLKKKYKEDSNNSVINNLFDFFGKEFCFHQITLTGFPIIWIDKTLLIEVGKFLYHLSQPYIMLYDLHGVDERIRLHREDLPKADFSVFYHLISIERNSDIMIKVPLLENDLILPTFTGLFPNANWYERETWDMFGIIFNNHPNLTRIIMPSTWKGHPLRKNYSARATEYEPFFLNEQKEDLEMEGLKFKPELWGMKRKNDNVEFMFLNLGPNHPSAHGAFRIVLQLDGENIVDCVPDIGYHHRGAEKMAERQSWHSYIPYTDRIEYLGGCVNELPYVLAVEKLANISVPEKAEVIRVMMSELFRINSHLLYISTFIQDVGCMTPVFFAFTDRQKIYDLIEAITGARMHPAWFRIGGVANDLPQGWNILLKEFLDWMPKRLKYYINTALKNSILIHRSKGIAEYNKKEALQWGVTGAGLRATGLNFDVRKWRPYSGYQNYTFEVPVGSGISDCYSRVMIKVEEIYQSLFILKQCLCNMPSGPFKSEDSLTTPPSKECVLQNIETMITHFLQVSWGPVIPENESFQMIEATKGINSYYLISDGGTMSYRTRIRTPSFPHLQQIPSVIRGSLISDLIVYLGSIDFVMSDVDR.

Residues 1-190 are NADH dehydrogenase I subunit C; sequence MIDLMPKKNT…EPFFLNEQKE (190 aa). An NADH dehydrogenase I subunit D region spans residues 214-600; that stretch reads EFMFLNLGPN…IDFVMSDVDR (387 aa).

The protein in the N-terminal section; belongs to the complex I 30 kDa subunit family. This sequence in the C-terminal section; belongs to the complex I 49 kDa subunit family. NDH-1 is composed of 13 different subunits. Subunits NuoB, CD, E, F, and G constitute the peripheral sector of the complex.

Its subcellular location is the cell inner membrane. The catalysed reaction is a quinone + NADH + 5 H(+)(in) = a quinol + NAD(+) + 4 H(+)(out). In terms of biological role, NDH-1 shuttles electrons from NADH, via FMN and iron-sulfur (Fe-S) centers, to quinones in the respiratory chain. The immediate electron acceptor for the enzyme in this species is believed to be ubiquinone. Couples the redox reaction to proton translocation (for every two electrons transferred, four hydrogen ions are translocated across the cytoplasmic membrane), and thus conserves the redox energy in a proton gradient. This is NADH-quinone oxidoreductase subunit C/D from Buchnera aphidicola subsp. Acyrthosiphon pisum (strain APS) (Acyrthosiphon pisum symbiotic bacterium).